The chain runs to 653 residues: Testicular spindle-associated protein SHCBP1L (653 aa).

The disordered stretch occupies residues 1–65; that stretch reads MASGSKASVP…PVKGKAGRET (65 aa). At serine 8 the chain carries Phosphoserine. Residues 28–41 show a composition bias toward polar residues; it reads SAVSGDTAAATTLK. Positions 46–56 are enriched in low complexity; sequence PVRSVVASPRP. Serine 53 carries the post-translational modification Phosphoserine. Residues 299 to 326 adopt a coiled-coil conformation; it reads IAQRFKKTLEKYKNKRVELIEYQSNIKE. 4 PbH1 repeats span residues 493 to 514, 515 to 537, 538 to 571, and 574 to 596; these read SGHM…CVLT, GAAL…ELYP, GSIA…NMKV, and APKL…SILQ. An N6-acetyllysine modification is found at lysine 570. Residue lysine 645 is modified to N6-acetyllysine.

In terms of assembly, interacts with HSPA2; this interaction may promote the recruitment of HSPA2 to the spindle. As to expression, expressed in spermatocytes and elongating spermatids inside the seminiferous tubules (at protein level). Testis-specific.

Its subcellular location is the cytoplasm. It is found in the cytoskeleton. It localises to the spindle. Testis-specific spindle-associated factor that plays a role in spermatogenesis. In association with HSPA2, participates in the maintenance of spindle integrity during meiosis in male germ cells. The protein is Testicular spindle-associated protein SHCBP1L of Homo sapiens (Human).